The chain runs to 653 residues: ATP-dependent zinc metalloprotease FtsH 1 (653 aa).

Residues M1 to R8 are Cytoplasmic-facing. The chain crosses the membrane as a helical span at residues N9–K29. Residues D30–N110 lie on the Extracellular side of the membrane. Residues W111 to M131 traverse the membrane as a helical segment. The Cytoplasmic portion of the chain corresponds to M132–S653. ATP is bound at residue G203 to T210. H425 serves as a coordination point for Zn(2+). The active site involves E426. Residues H429 and D501 each contribute to the Zn(2+) site. The disordered stretch occupies residues E604–S653. Over residues H624–P637 the composition is skewed to basic and acidic residues. The span at H638 to S653 shows a compositional bias: pro residues.

This sequence in the central section; belongs to the AAA ATPase family. In the C-terminal section; belongs to the peptidase M41 family. In terms of assembly, homohexamer. Requires Zn(2+) as cofactor.

Its subcellular location is the cell membrane. In terms of biological role, acts as a processive, ATP-dependent zinc metallopeptidase for both cytoplasmic and membrane proteins. Plays a role in the quality control of integral membrane proteins. This chain is ATP-dependent zinc metalloprotease FtsH 1, found in Sphaerobacter thermophilus (strain ATCC 49802 / DSM 20745 / KCCM 41009 / NCIMB 13125 / S 6022).